The primary structure comprises 569 residues: Ferredoxin--nitrite reductase, chloroplastic (569 aa).

Residues Ile1 to Arg4 constitute a chloroplast transit peptide. The disordered stretch occupies residues Ile1–Glu28. [4Fe-4S] cluster-binding residues include Cys447, Cys453, Cys488, and Cys492. Cys492 provides a ligand contact to siroheme.

The protein belongs to the nitrite and sulfite reductase 4Fe-4S domain family. Monomer. The cofactor is siroheme. It depends on [4Fe-4S] cluster as a cofactor.

It localises to the plastid. The protein resides in the chloroplast. The catalysed reaction is 6 oxidized [2Fe-2S]-[ferredoxin] + NH4(+) + 2 H2O = nitrite + 6 reduced [2Fe-2S]-[ferredoxin] + 8 H(+). It functions in the pathway nitrogen metabolism; nitrate reduction (assimilation). This is Ferredoxin--nitrite reductase, chloroplastic (NIR) from Zea mays (Maize).